The sequence spans 155 residues: CASP-like protein 5B2 (155 aa).

At M1–R18 the chain is on the cytoplasmic side. A helical membrane pass occupies residues V19 to A39. N-linked (GlcNAc...) asparagine glycosylation occurs at N40. Residues N40 to A43 are Extracellular-facing. Residues F44–L64 form a helical membrane-spanning segment. Over D65 to N77 the chain is Cytoplasmic. The helical transmembrane segment at A78–A98 threads the bilayer. Over S99 to E128 the chain is Extracellular. The helical transmembrane segment at L129–F149 threads the bilayer. Residues C150 to F155 lie on the Cytoplasmic side of the membrane.

This sequence belongs to the Casparian strip membrane proteins (CASP) family. In terms of assembly, homodimer and heterodimers.

Its subcellular location is the cell membrane. In Oryza sativa subsp. indica (Rice), this protein is CASP-like protein 5B2.